The chain runs to 317 residues: Acetyl-coenzyme A carboxylase carboxyl transferase subunit alpha (317 aa).

Residues 40–294 form the CoA carboxyltransferase C-terminal domain; it reads RLQHKSQELT…KQQILADLAE (255 aa).

Belongs to the AccA family. As to quaternary structure, acetyl-CoA carboxylase is a heterohexamer composed of biotin carboxyl carrier protein (AccB), biotin carboxylase (AccC) and two subunits each of ACCase subunit alpha (AccA) and ACCase subunit beta (AccD).

The protein localises to the cytoplasm. It catalyses the reaction N(6)-carboxybiotinyl-L-lysyl-[protein] + acetyl-CoA = N(6)-biotinyl-L-lysyl-[protein] + malonyl-CoA. The protein operates within lipid metabolism; malonyl-CoA biosynthesis; malonyl-CoA from acetyl-CoA: step 1/1. Its function is as follows. Component of the acetyl coenzyme A carboxylase (ACC) complex. First, biotin carboxylase catalyzes the carboxylation of biotin on its carrier protein (BCCP) and then the CO(2) group is transferred by the carboxyltransferase to acetyl-CoA to form malonyl-CoA. The chain is Acetyl-coenzyme A carboxylase carboxyl transferase subunit alpha from Haemophilus ducreyi (strain 35000HP / ATCC 700724).